The primary structure comprises 611 residues: Inhibitor of apoptosis protein (611 aa).

3 BIR repeats span residues 30–97 (ELYR…CSFV), 176–242 (EEAR…CPFV), and 262–329 (HEAR…CEYL). Positions 299, 302, 319, and 326 each coordinate Zn(2+). Positions 446–536 (VASDDLSLIR…VLYKDLFVEK (91 aa)) constitute a CARD domain. The segment at 564-599 (CKVCMDKEVSIVFIPCGHLVVCKECAPSLRKCPICR) adopts an RING-type zinc-finger fold.

It belongs to the IAP family. In terms of tissue distribution, cells of the T-lymphocyte lineage. Found in both cortical and medullary cells of the thymus. Expressed at relatively high levels also in spleen, bursa, intestine and lung and at very low levels in testis, brain and skeletal muscle.

It localises to the nucleus. The protein localises to the cytoplasm. Functionally, apoptotic suppressor. The sequence is that of Inhibitor of apoptosis protein (ITA) from Gallus gallus (Chicken).